The sequence spans 277 residues: NH(3)-dependent NAD(+) synthetase (277 aa).

36–43 is an ATP binding site; it reads GLSGGIDS. A Mg(2+)-binding site is contributed by D42. R118 provides a ligand contact to deamido-NAD(+). T138 lines the ATP pocket. E143 lines the Mg(2+) pocket. Residues K167 and S189 each coordinate ATP.

It belongs to the NAD synthetase family. In terms of assembly, homodimer.

It carries out the reaction deamido-NAD(+) + NH4(+) + ATP = AMP + diphosphate + NAD(+) + H(+). The protein operates within cofactor biosynthesis; NAD(+) biosynthesis; NAD(+) from deamido-NAD(+) (ammonia route): step 1/1. In terms of biological role, catalyzes the ATP-dependent amidation of deamido-NAD to form NAD. Uses ammonia as a nitrogen source. In Chlorobium phaeobacteroides (strain BS1), this protein is NH(3)-dependent NAD(+) synthetase.